Consider the following 117-residue polypeptide: UPF0102 protein Clos_1471 (117 aa).

The protein belongs to the UPF0102 family.

In Alkaliphilus oremlandii (strain OhILAs) (Clostridium oremlandii (strain OhILAs)), this protein is UPF0102 protein Clos_1471.